Consider the following 833-residue polypeptide: Leucine--tRNA ligase (833 aa).

The 'HIGH' region signature appears at 41 to 52 (PYPSGAGLHVGH). The 'KMSKS' region motif lies at 610–614 (KMSKS). ATP is bound at residue Lys-613.

Belongs to the class-I aminoacyl-tRNA synthetase family.

The protein localises to the cytoplasm. The catalysed reaction is tRNA(Leu) + L-leucine + ATP = L-leucyl-tRNA(Leu) + AMP + diphosphate. The chain is Leucine--tRNA ligase from Streptococcus equi subsp. equi (strain 4047).